Here is a 239-residue protein sequence, read N- to C-terminus: uncharacterized protein (239 aa).

This is an uncharacterized protein from Escherichia coli O157:H7.